Reading from the N-terminus, the 135-residue chain is Large ribosomal subunit protein uL16c (135 aa).

Belongs to the universal ribosomal protein uL16 family. As to quaternary structure, part of the 50S ribosomal subunit.

The protein localises to the plastid. The protein resides in the chloroplast. The protein is Large ribosomal subunit protein uL16c of Cucumis sativus (Cucumber).